Here is a 347-residue protein sequence, read N- to C-terminus: Anthranilate phosphoribosyltransferase (347 aa).

Residues G88, 91–92, T96, 98–101, 116–124, and S128 each bind 5-phospho-alpha-D-ribose 1-diphosphate; these read GD, NIST, and KHGNRSVSS. G88 lines the anthranilate pocket. Residue S100 coordinates Mg(2+). N119 serves as a coordination point for anthranilate. R174 contacts anthranilate. D232 and E233 together coordinate Mg(2+).

The protein belongs to the anthranilate phosphoribosyltransferase family. In terms of assembly, homodimer. Mg(2+) is required as a cofactor.

The catalysed reaction is N-(5-phospho-beta-D-ribosyl)anthranilate + diphosphate = 5-phospho-alpha-D-ribose 1-diphosphate + anthranilate. The protein operates within amino-acid biosynthesis; L-tryptophan biosynthesis; L-tryptophan from chorismate: step 2/5. Its function is as follows. Catalyzes the transfer of the phosphoribosyl group of 5-phosphorylribose-1-pyrophosphate (PRPP) to anthranilate to yield N-(5'-phosphoribosyl)-anthranilate (PRA). In Shewanella sp. (strain ANA-3), this protein is Anthranilate phosphoribosyltransferase.